Here is a 525-residue protein sequence, read N- to C-terminus: MSQDIHAHKILILDFGSQYTQLIARRVREIGVYCEVRAFDMEDQDVIDFDPKGIILAGGPESVPEPGSPRAPEAVFTLGVPVFGICYGMQTMAEQLGGKVQGSEIREFGYAQIRKHEGPALFDDIQDHIANNGVALLDVWMSHGDKVITMPEDFTLMASTDSCPIAAMANEAKKFYGVQFHPEVTHTLQGGRILSRFIVDICGCDTLWTPANIAQDAIERMQEQVGDKKVLLALSGGVDSSVVAALLHKAIGDQLTCVFVDNGLLRLHEGDQVMKMFADNMGVKVIRVDAEDLFLGKLANEADPEKKRKIIGNTFIDVFDTEATKLTDVEFLAQGTIYPDVIESAASKTGKAHVIKSHHNVGGLPEDMQFKLVEPLRELFKDEVRKLGLELGLPYDMVYRHPFPGPGLGVRILGEVKKEYADILRRADAIFIEELRNAGWYEKTSQAFAVFLPVKSVGVVGDGRRYEYVVALRAVETIDFMTARWAHLPYELLEKVSGRIINEIEHISRVTYDVSSKPPATIEWE.

Positions 9 to 207 constitute a Glutamine amidotransferase type-1 domain; sequence KILILDFGSQ…IVDICGCDTL (199 aa). C86 acts as the Nucleophile in catalysis. Residues H181 and E183 contribute to the active site. Residues 208 to 400 enclose the GMPS ATP-PPase domain; sequence WTPANIAQDA…LGLPYDMVYR (193 aa). Position 235–241 (235–241) interacts with ATP; it reads SGGVDSS.

As to quaternary structure, homodimer.

It carries out the reaction XMP + L-glutamine + ATP + H2O = GMP + L-glutamate + AMP + diphosphate + 2 H(+). It functions in the pathway purine metabolism; GMP biosynthesis; GMP from XMP (L-Gln route): step 1/1. Functionally, catalyzes the synthesis of GMP from XMP. The sequence is that of GMP synthase [glutamine-hydrolyzing] from Marinomonas sp. (strain MWYL1).